The chain runs to 466 residues: Glutamate--tRNA ligase 2 (466 aa).

The short motif at Pro11–Gly21 is the 'HIGH' region element. Residues Lys239–Arg243 carry the 'KMSKS' region motif. Position 242 (Lys242) interacts with ATP.

Belongs to the class-I aminoacyl-tRNA synthetase family. Glutamate--tRNA ligase type 1 subfamily. As to quaternary structure, monomer.

It localises to the cytoplasm. It carries out the reaction tRNA(Glu) + L-glutamate + ATP = L-glutamyl-tRNA(Glu) + AMP + diphosphate. Its function is as follows. Catalyzes the attachment of glutamate to tRNA(Glu) in a two-step reaction: glutamate is first activated by ATP to form Glu-AMP and then transferred to the acceptor end of tRNA(Glu). In Roseobacter denitrificans (strain ATCC 33942 / OCh 114) (Erythrobacter sp. (strain OCh 114)), this protein is Glutamate--tRNA ligase 2.